Reading from the N-terminus, the 280-residue chain is 2,3,4,5-tetrahydropyridine-2,6-dicarboxylate N-succinyltransferase (280 aa).

Residues Arg107 and Asp144 each contribute to the substrate site.

The protein belongs to the transferase hexapeptide repeat family. As to quaternary structure, homotrimer.

It localises to the cytoplasm. It catalyses the reaction (S)-2,3,4,5-tetrahydrodipicolinate + succinyl-CoA + H2O = (S)-2-succinylamino-6-oxoheptanedioate + CoA. Its pathway is amino-acid biosynthesis; L-lysine biosynthesis via DAP pathway; LL-2,6-diaminopimelate from (S)-tetrahydrodipicolinate (succinylase route): step 1/3. The polypeptide is 2,3,4,5-tetrahydropyridine-2,6-dicarboxylate N-succinyltransferase (Granulibacter bethesdensis (strain ATCC BAA-1260 / CGDNIH1)).